We begin with the raw amino-acid sequence, 567 residues long: Hydroxylamine reductase 2 (567 aa).

Cysteine 5, cysteine 8, cysteine 17, and cysteine 23 together coordinate [4Fe-4S] cluster. Positions 262, 286, 330, 421, 449, 474, 509, and 511 each coordinate hybrid [4Fe-2O-2S] cluster. Cysteine 421 is subject to Cysteine persulfide.

Belongs to the HCP family. It depends on [4Fe-4S] cluster as a cofactor. Hybrid [4Fe-2O-2S] cluster is required as a cofactor.

The protein resides in the cytoplasm. The enzyme catalyses A + NH4(+) + H2O = hydroxylamine + AH2 + H(+). Catalyzes the reduction of hydroxylamine to form NH(3) and H(2)O. This chain is Hydroxylamine reductase 2, found in Clostridium acetobutylicum (strain ATCC 824 / DSM 792 / JCM 1419 / IAM 19013 / LMG 5710 / NBRC 13948 / NRRL B-527 / VKM B-1787 / 2291 / W).